A 511-amino-acid chain; its full sequence is MSDIKVTLAVEDRAENQDTLSISEIVPRIVAERKSFVDVTEESLLEEIANCVADSADDNVKDEVDEKPDESPFDQHRLKLLENVKAAYNESALALDFVSLLISSVRPTSASTSMSPHLKTHIPVGSLGADRVPAPQVANEPGVGIGWKIESLTNARDRLKTCASRLRTEAAKEKTYWAGVASIAATGEVLFKVRNSDTRGLGIKYGFGDAGSKYRDPGIGVLKRSATGTVDFEPKEEVQKKFVRVTIKSEEGEVTKSVSNVYTRDSKPPTDPTLAAIHETRHALFEEELFFEIAREARLLTSRKVTVADGAVTVDLGEGDMVVIEWVEVPEEPTTTFAPSLANLFVLALRLLLANAHRQQLEKMRTPPAPLQSKGGPNPNPPLPILRPLLAHILHKRLVSRARRSLYLLSTTHSGLSFEITTNNSTDKESSSLGRLMAAPVSNLKIKFSDKGNAKVVIPSPLQSHQSMFDVTMFKGTSQETVTSHTGFHELVELEEWVRWAADRSEPKKSN.

The protein belongs to the Mediator complex subunit 17 family. In terms of assembly, component of the Mediator complex.

Its subcellular location is the nucleus. In terms of biological role, component of the Mediator complex, a coactivator involved in the regulated transcription of nearly all RNA polymerase II-dependent genes. Mediator functions as a bridge to convey information from gene-specific regulatory proteins to the basal RNA polymerase II transcription machinery. Mediator is recruited to promoters by direct interactions with regulatory proteins and serves as a scaffold for the assembly of a functional preinitiation complex with RNA polymerase II and the general transcription factors. This chain is Mediator of RNA polymerase II transcription subunit 17 (SRB4), found in Yarrowia lipolytica (strain CLIB 122 / E 150) (Yeast).